The following is a 267-amino-acid chain: Tryptophan synthase alpha chain (267 aa).

Residues Glu-49 and Asp-60 each act as proton acceptor in the active site.

Belongs to the TrpA family. In terms of assembly, tetramer of two alpha and two beta chains.

It catalyses the reaction (1S,2R)-1-C-(indol-3-yl)glycerol 3-phosphate + L-serine = D-glyceraldehyde 3-phosphate + L-tryptophan + H2O. The protein operates within amino-acid biosynthesis; L-tryptophan biosynthesis; L-tryptophan from chorismate: step 5/5. Functionally, the alpha subunit is responsible for the aldol cleavage of indoleglycerol phosphate to indole and glyceraldehyde 3-phosphate. The polypeptide is Tryptophan synthase alpha chain (Cyanothece sp. (strain PCC 7425 / ATCC 29141)).